The sequence spans 352 residues: Type II restriction enzyme HaeII (352 aa).

The enzyme catalyses Endonucleolytic cleavage of DNA to give specific double-stranded fragments with terminal 5'-phosphates.. A P subtype restriction enzyme that recognizes the double-stranded sequence 5'-RGCGCY-3' and cleaves after C-5. This chain is Type II restriction enzyme HaeII (haeIIR), found in Haemophilus aegyptius.